A 124-amino-acid polypeptide reads, in one-letter code: Putative iron-sulfur cluster insertion protein ErpA (124 aa).

Positions 52, 116, and 118 each coordinate iron-sulfur cluster.

Belongs to the HesB/IscA family. Homodimer. It depends on iron-sulfur cluster as a cofactor.

Its function is as follows. Required for insertion of 4Fe-4S clusters. The chain is Putative iron-sulfur cluster insertion protein ErpA from Ralstonia nicotianae (strain ATCC BAA-1114 / GMI1000) (Ralstonia solanacearum).